We begin with the raw amino-acid sequence, 277 residues long: Inositol monophosphatase 1 (277 aa).

4 residues coordinate Mg(2+): Glu-70, Asp-90, Ile-92, and Asp-93. Glu-70 provides a ligand contact to substrate. Residues 92–95, 194–196, Glu-213, and Asp-220 contribute to the substrate site; these read IDGT and GTA. Position 220 (Asp-220) interacts with Mg(2+).

This sequence belongs to the inositol monophosphatase superfamily. Homodimer. Requires Mg(2+) as cofactor. As to expression, ubiquitous.

Its subcellular location is the cytoplasm. It catalyses the reaction a myo-inositol phosphate + H2O = myo-inositol + phosphate. The enzyme catalyses 1D-myo-inositol 1-phosphate + H2O = myo-inositol + phosphate. The catalysed reaction is 1D-myo-inositol 2-phosphate + H2O = myo-inositol + phosphate. It carries out the reaction 1D-myo-inositol 3-phosphate + H2O = myo-inositol + phosphate. It catalyses the reaction 1D-myo-inositol 4-phosphate + H2O = myo-inositol + phosphate. The enzyme catalyses 1D-myo-inositol 5-phosphate + H2O = myo-inositol + phosphate. The catalysed reaction is 1D-myo-inositol 6-phosphate + H2O = myo-inositol + phosphate. It carries out the reaction scyllo-inositol 1-phosphate + H2O = scyllo-inositol + phosphate. It catalyses the reaction alpha-D-galactose 1-phosphate + H2O = D-galactose + phosphate. The enzyme catalyses alpha-D-glucose 1-phosphate + H2O = D-glucose + phosphate. The catalysed reaction is D-glucose 6-phosphate + H2O = D-glucose + phosphate. It carries out the reaction beta-D-fructose 1-phosphate + H2O = D-fructose + phosphate. It catalyses the reaction glycerol 2-phosphate + H2O = glycerol + phosphate. The enzyme catalyses adenosine 2'-phosphate + H2O = adenosine + phosphate. The protein operates within polyol metabolism; myo-inositol biosynthesis; myo-inositol from D-glucose 6-phosphate: step 2/2. Activity with myo-inositol monophosphate and D-galactose 1-phosphate is inhibited by Li(+), Ca(2+) and Mn(2+), but also by Mg(2+) at concentrations above 3 mM. Functionally, phosphatase involved in the dephosphorylation of myo-inositol monophosphate to generate myo-inositol. Is also able to dephosphorylate scyllo-inositol-phosphate, myo-inositol 1,4-diphosphate, scyllo-inositol-1,3-diphosphate and scyllo-inositol-1,4-diphosphate. Also dephosphorylates in vitro other sugar-phosphates including D-galactose-1-phosphate, glucose-1-phosphate, glucose-6-phosphate, fructose-1-phosphate, beta-glycerophosphate and 2'-AMP. Responsible for the provision of inositol required for synthesis of phosphatidylinositol and polyphosphoinositides, and involved in maintaining normal brain function. Has been implicated as the pharmacological target for lithium Li(+) action in brain. Is equally active with myo-inositol monophosphate and D-galactose 1-phosphate. The sequence is that of Inositol monophosphatase 1 (Impa1) from Rattus norvegicus (Rat).